The following is a 390-amino-acid chain: MGIHQLMQFLKEKAPNCFRTLMLDYFAGRTIGCDASMAMYQFLIQTQSAGLTQIIELTDKEGNRTGHLVGLFNRTLQFLENGIKPVWVFDGKPPLLKSGELARRKKLKEEAKVKTELALEQGDMQQALLQNQRTTTISSIMKEDAIKMLQLMGCPVIIAPCEAEAQCAELCRAGKIYATATEDMDALTFRTPVLLRGFNTKKEPIYEIIYDDMIKELELTYEQFVDLCILCGCDYTEKIEGIGPGTAYKLIKEYKSIEGILEHVQKVNAEREKNNQNPKYTVPSKFLYQDSRELFITPLVQKGDELQLTWNKPDVDNLKKFLIEEKGFAESRIDNGLKRIAKKDPAGFQSRLENFFGKTTKIIHPNNSKAKAKSNKKTEQPQKSGGKKKI.

Residues 1–108 (MGIHQLMQFL…GELARRKKLK (108 aa)) are N-domain. Asp34 serves as a coordination point for Mg(2+). Arg74 lines the DNA pocket. The Mg(2+) site is built by Asp90, Glu162, Glu164, Asp183, and Asp185. Positions 126-254 (QALLQNQRTT…GTAYKLIKEY (129 aa)) are I-domain. Residue Glu162 coordinates DNA. Gly232 and Asp234 together coordinate DNA. Asp234 is a binding site for Mg(2+). The interval 348 to 356 (FQSRLENFF) is interaction with PCNA. The segment at 359–390 (TTKIIHPNNSKAKAKSNKKTEQPQKSGGKKKI) is disordered.

It belongs to the XPG/RAD2 endonuclease family. FEN1 subfamily. In terms of assembly, interacts with PCNA. Three molecules of FEN1 bind to one PCNA trimer with each molecule binding to one PCNA monomer. PCNA stimulates the nuclease activity without altering cleavage specificity. Mg(2+) serves as cofactor. Post-translationally, phosphorylated. Phosphorylation upon DNA damage induces relocalization to the nuclear plasma.

The protein localises to the nucleus. It is found in the nucleolus. Its subcellular location is the nucleoplasm. The protein resides in the mitochondrion. In terms of biological role, structure-specific nuclease with 5'-flap endonuclease and 5'-3' exonuclease activities involved in DNA replication and repair. During DNA replication, cleaves the 5'-overhanging flap structure that is generated by displacement synthesis when DNA polymerase encounters the 5'-end of a downstream Okazaki fragment. It enters the flap from the 5'-end and then tracks to cleave the flap base, leaving a nick for ligation. Also involved in the long patch base excision repair (LP-BER) pathway, by cleaving within the apurinic/apyrimidinic (AP) site-terminated flap. Acts as a genome stabilization factor that prevents flaps from equilibrating into structures that lead to duplications and deletions. Also possesses 5'-3' exonuclease activity on nicked or gapped double-stranded DNA, and exhibits RNase H activity. Also involved in replication and repair of rDNA and in repairing mitochondrial DNA. This chain is Flap endonuclease 1-2, found in Paramecium tetraurelia.